The following is a 717-amino-acid chain: Ribosomal RNA large subunit methyltransferase K/L (717 aa).

The THUMP domain maps to 44-155; the sequence is DAYKVCIYSY…KQFVNVFLCL (112 aa).

The protein belongs to the methyltransferase superfamily. RlmKL family.

It localises to the cytoplasm. The enzyme catalyses guanosine(2445) in 23S rRNA + S-adenosyl-L-methionine = N(2)-methylguanosine(2445) in 23S rRNA + S-adenosyl-L-homocysteine + H(+). It catalyses the reaction guanosine(2069) in 23S rRNA + S-adenosyl-L-methionine = N(2)-methylguanosine(2069) in 23S rRNA + S-adenosyl-L-homocysteine + H(+). In terms of biological role, specifically methylates the guanine in position 2445 (m2G2445) and the guanine in position 2069 (m7G2069) of 23S rRNA. In Francisella tularensis subsp. tularensis (strain SCHU S4 / Schu 4), this protein is Ribosomal RNA large subunit methyltransferase K/L.